The chain runs to 2430 residues: Protein TASOR 2 (2430 aa).

S19, S219, and S384 each carry phosphoserine. Disordered stretches follow at residues 416-488 and 577-648; these read LDRK…GETA and RGTS…SQSS. S685 carries the phosphoserine modification. Residues 704 to 727 form a disordered region; that stretch reads LLLQQKPPDDPVVKPKDRPPSARV. Basic and acidic residues predominate over residues 710–723; it reads PPDDPVVKPKDRPP. A phosphoserine mark is found at S1025, S1087, and S1172. A disordered region spans residues 1331 to 1360; it reads LTESREVSSADNVSVYPSVSEEPVENKERK. Residue S1541 is modified to Phosphoserine. The tract at residues 1700–1727 is disordered; it reads EAELHKETTGPGTAGPQSNTTSSLKGER. A compositionally biased stretch (polar residues) spans 1714 to 1723; it reads GPQSNTTSSL. Position 1848 is a phosphoserine (S1848). K2007 is covalently cross-linked (Glycyl lysine isopeptide (Lys-Gly) (interchain with G-Cter in SUMO2)). S2009, S2037, S2062, and S2066 each carry phosphoserine. The interval 2046–2069 is disordered; sequence SDPRPQGQPRRGYTASSLDSSSSW.

It belongs to the TASOR family.

In Homo sapiens (Human), this protein is Protein TASOR 2.